We begin with the raw amino-acid sequence, 263 residues long: Putative TATA-binding protein pB263R (263 aa).

The protein belongs to the asfivirus B263R family.

Functionally, putative TATA-binding protein. In African swine fever virus (isolate Pig/Kenya/KEN-50/1950) (ASFV), this protein is Putative TATA-binding protein pB263R.